Here is a 579-residue protein sequence, read N- to C-terminus: Cytochrome P450 monooxygenase prx9 (579 aa).

A helical membrane pass occupies residues 6–25 (LPLGSFVGTTLLLFILYKLV). Residues Asn194, Asn292, and Asn390 are each glycosylated (N-linked (GlcNAc...) asparagine). A heme-binding site is contributed by Cys512.

Belongs to the cytochrome P450 family. The cofactor is heme.

The protein localises to the membrane. It functions in the pathway sesquiterpene biosynthesis. Functionally, cytochrome P450 monooxygenase; part of the gene cluster that mediates the biosynthesis of PR-toxin, a bicyclic sesquiterpene belonging to the eremophilane class and acting as a mycotoxin. The first step of the pathway is catalyzed by the aristolochene synthase which performs the cyclization of trans,trans-farnesyl diphosphate (FPP) to the bicyclic sesquiterpene aristolochene. Following the formation of aristolochene, the non-oxygenated aristolochene is converted to the trioxygenated intermediate eremofortin B, via 7-epi-neopetasone. This conversion appears to involve three enzymes, a hydroxysterol oxidase-like enzyme, the quinone-oxidase prx3 that forms the quinone-type-structure in the bicyclic nucleus of aristolochene with the C8-oxo group and the C-3 hydroxyl group, and the P450 monooxygenase prx9 that introduces the epoxide at the double bond between carbons 1 and 2. No monoxy or dioxy-intermediates have been reported to be released to the broth, so these three early oxidative reactions may be coupled together. Eremofortin B is further oxidized by another P450 monooxygenase, that introduces a second epoxide between carbons 7 and 11 prior to acetylation to eremofortin A by the acetyltransferase prx11. The second epoxidation may be performed by a second P450 monooxygenase. After the acetylation step, eremofortin A is converted to eremofortin C and then to PR-toxin. First the conversion of eremofortin A to eremofortin C proceeds by oxidation of the side chain of the molecule at C-12 and is catalyzed by the short-chain oxidoreductase prx1. The cytochrome P450 monooxygenase prx8 also plays a role in this step. The primary alcohol formed at C-12 is finally oxidized by the short-chain alcohol dehydrogenase prx4 that forms PR-toxin. This is Cytochrome P450 monooxygenase prx9 from Penicillium rubens (strain ATCC 28089 / DSM 1075 / NRRL 1951 / Wisconsin 54-1255) (Penicillium chrysogenum).